The primary structure comprises 380 residues: Alkaline protease (380 aa).

The first 27 residues, 1–27 (MKKPLGKIVASTALLISVAFSSSIASA), serve as a signal peptide directing secretion. The propeptide occupies 28–111 (AEEAKEKYLI…IEEDAEVTTM (84 aa)). Positions 34–111 (KYLIGFNEQE…IEEDAEVTTM (78 aa)) constitute an Inhibitor I9 domain. Position 113 (glutamine 113) interacts with Ca(2+). The Peptidase S8 domain maps to 116-379 (PWGISRVQAP…SGLVNAEAAT (264 aa)). Catalysis depends on aspartate 143, which acts as the Charge relay system. A Ca(2+)-binding site is contributed by aspartate 151. The Charge relay system role is filled by histidine 173. Leucine 184, asparagine 186, isoleucine 188, valine 190, alanine 274, tyrosine 276, and alanine 279 together coordinate Ca(2+). Serine 326 (charge relay system) is an active-site residue.

It belongs to the peptidase S8 family. Ca(2+) serves as cofactor.

It localises to the secreted. This Shouchella clausii (Alkalihalobacillus clausii) protein is Alkaline protease.